The following is a 295-amino-acid chain: Protoheme IX farnesyltransferase (295 aa).

The Cytoplasmic segment spans residues 1-9 (MSVKHFIQI). Residues 10-28 (TKPGIIFGNVLSVAGGFFL) traverse the membrane as a helical segment. At 29 to 37 (ASKGHVDFA) the chain is on the periplasmic side. The chain crosses the membrane as a helical span at residues 38–56 (LFLAVVIGTSLVVASGCVF). Residues 57–78 (NNCIDRDIDHKMERTKNRVMVQ) lie on the Cytoplasmic side of the membrane. The helical transmembrane segment at 79-97 (GGMSLPLALIYATLLGVAG) threads the bilayer. Residues 98 to 107 (FSLLYVQANP) lie on the Periplasmic side of the membrane. The chain crosses the membrane as a helical span at residues 108–126 (LSAFCALIGFIVYVGFYSL). Topologically, residues 127–197 (WLKRKSVHGT…YSAANIPVLP (71 aa)) are cytoplasmic. A helical membrane pass occupies residues 198-216 (VARGILAAKKQIVLYVLAF). Topologically, residues 217–228 (VLATLMLTLGGY) are periplasmic. The chain crosses the membrane as a helical span at residues 229–247 (AGLGYLAVAAAMGLYWLYM). Topologically, residues 248-268 (AWGGYKAEDDSKWARKVFGFS) are cytoplasmic. A helical transmembrane segment spans residues 269-287 (ILTVTALSVMMGVDSQTAA). At 288-295 (DVLMTYAR) the chain is on the periplasmic side.

This sequence belongs to the UbiA prenyltransferase family. Mg(2+) is required as a cofactor. It depends on Ca(2+) as a cofactor.

The protein resides in the cell inner membrane. The catalysed reaction is heme b + (2E,6E)-farnesyl diphosphate + H2O = Fe(II)-heme o + diphosphate. Functionally, converts protoheme IX and farnesyl diphosphate to heme O. This chain is Protoheme IX farnesyltransferase (cyoE), found in Pseudomonas putida (Arthrobacter siderocapsulatus).